A 103-amino-acid chain; its full sequence is Phorbol-12-myristate-13-acetate-induced protein 1 (103 aa).

2 consecutive short sequence motifs (BH3) follow at residues 27-35 and 78-86; these read LRKIGDKVY and LRRIGDKVN. The interval 90–99 is required for mitochondrial location; it reads KLLNLISKLF.

Belongs to the PMAIP1 family. As to quaternary structure, interacts with MCL1. Interacts with BCL2A1. Interacts with BAX. Interacts with BCL2L10. Detected in thymocytes after irradiation with X-rays. Not detectable in untreated thymocytes (at protein level). Detected in embryonic neural precursor cells of the telencephalon Constitutively expressed at low levels in adult brain, testis, thymus, spleen, lung and kidney.

It is found in the mitochondrion. Functionally, promotes activation of caspases and apoptosis. Promotes mitochondrial membrane changes and efflux of apoptogenic proteins from the mitochondria. Contributes to p53/TP53-dependent apoptosis after radiation exposure. Promotes proteasomal degradation of MCL1. Competes with BIM/BCL2L11 for binding to MCL1 and can displace BIM/BCL2L11 from its binding site on MCL1. Competes with BAK1 for binding to MCL1 and can displace BAK1 from its binding site on MCL1. The sequence is that of Phorbol-12-myristate-13-acetate-induced protein 1 (Pmaip1) from Mus musculus (Mouse).